The following is a 588-amino-acid chain: MPTLRDSTMSHPGENPHQVRVKAYYRGDIMITHFEPSISYEGLCNEVRDMCSMDNDQLFTMKWIDEEGDPCTVSSQLELEEALRLYELNKDSELIIHVFPCVPEKPGMPCPGEDKSIYRRGARRWRKLYYATGHAFQAKRFNRRAHCAICTDRIWGLGRQGYKCINCKLLVHKKCHKLVTVECGRQVIQDPMIGRIDPGSTHPEHPDQVLGKKNSTESINHEGEEHEAVGSRESGKAVSSLGLIDFDLLRVIGRGSYAKVLLVRLKKTERIYAMKVVKKELVNDDEDIDWVQTEKHVFEQASNHPFLVGLHSCFQTESRLFFVIEYVNGGDLMFHMQRQRKLPEEHARFYSAEISLALNYLHERGIIYRDLKLDNVLLDSEGHIKLTDYGMCKEGLRPGDTTSTFCGTPNYIAPEILRGEDYGFSVDWWALGVLMFEMMAGRSPFDIVGSSDNPDQNTEDYLFQVILEKQIRIPRSLSVKAASVLKGFLNKESKERLGCHPQTGFADIMAHPFFRNVDWDLMEQKQVVPPFKPNISGEFGLDNFDAQFTNEPIQLTPDDDDAVKKIDQSEFEGFEYINPLLMSAEECV.

A PB1 domain is found at 18–101 (QVRVKAYYRG…SELIIHVFPC (84 aa)). The Phorbol-ester/DAG-type zinc finger occupies 133-183 (GHAFQAKRFNRRAHCAICTDRIWGLGRQGYKCINCKLLVHKKCHKLVTVEC). Residues 194–213 (GRIDPGSTHPEHPDQVLGKK) are disordered. In terms of domain architecture, Protein kinase spans 246-514 (FDLLRVIGRG…FADIMAHPFF (269 aa)). ATP-binding positions include 252–260 (IGRGSYAKV) and K275. Residue D370 is the Proton acceptor of the active site. Phosphothreonine occurs at positions 404 and 556. Positions 515–586 (RNVDWDLMEQ…INPLLMSAEE (72 aa)) constitute an AGC-kinase C-terminal domain.

It belongs to the protein kinase superfamily. AGC Ser/Thr protein kinase family. PKC subfamily.

It catalyses the reaction L-seryl-[protein] + ATP = O-phospho-L-seryl-[protein] + ADP + H(+). The enzyme catalyses L-threonyl-[protein] + ATP = O-phospho-L-threonyl-[protein] + ADP + H(+). Its activity is regulated as follows. Exhibits an elevated basal enzymatic activity and is not regulated by diacylglycerol, phosphatidylserine, phorbol esters or calcium ions. Two specific sites, Thr-404 (activation loop of the kinase domain) and Thr-556 (turn motif), need to be phosphorylated for its full activation. Functionally, calcium- and diacylglycerol-independent serine/ threonine-protein kinase that plays a general protective role against apoptotic stimuli, is involved in NF-kappa-B activation, cell survival, differentiation and polarity, and contributes to the regulation of microtubule dynamics in the early secretory pathway. Is required for the formation and maintenance of the zonula adherens during early epithelial development and plays a critical role in organ morphogenesis and in regulating the orientation of cell division. Required for polarized epithelial organization, myocardium coherence and cell connectivity in the early somite stages. Required for heart cone tilt and development of circulatory architecture during embryogenesis. The protein is Protein kinase C iota type (prkci) of Danio rerio (Zebrafish).